Consider the following 81-residue polypeptide: Small ribosomal subunit protein bS16 (81 aa).

This sequence belongs to the bacterial ribosomal protein bS16 family.

In Lachnoclostridium phytofermentans (strain ATCC 700394 / DSM 18823 / ISDg) (Clostridium phytofermentans), this protein is Small ribosomal subunit protein bS16.